Consider the following 314-residue polypeptide: Ribonuclease Z (314 aa).

Zn(2+) contacts are provided by His-61, His-63, Asp-65, His-66, His-137, Asp-207, and His-263. Asp-65 (proton acceptor) is an active-site residue.

This sequence belongs to the RNase Z family. As to quaternary structure, homodimer. Zn(2+) serves as cofactor.

It carries out the reaction Endonucleolytic cleavage of RNA, removing extra 3' nucleotides from tRNA precursor, generating 3' termini of tRNAs. A 3'-hydroxy group is left at the tRNA terminus and a 5'-phosphoryl group is left at the trailer molecule.. Zinc phosphodiesterase, which displays some tRNA 3'-processing endonuclease activity. Probably involved in tRNA maturation, by removing a 3'-trailer from precursor tRNA. The sequence is that of Ribonuclease Z from Thermococcus kodakarensis (strain ATCC BAA-918 / JCM 12380 / KOD1) (Pyrococcus kodakaraensis (strain KOD1)).